The sequence spans 89 residues: Putative membrane protein insertion efficiency factor (89 aa).

The disordered stretch occupies residues 69–89 (DPVPPAHTERGGTMCPSRLPE).

It belongs to the UPF0161 family.

It is found in the cell inner membrane. Functionally, could be involved in insertion of integral membrane proteins into the membrane. In Paramagnetospirillum magneticum (strain ATCC 700264 / AMB-1) (Magnetospirillum magneticum), this protein is Putative membrane protein insertion efficiency factor.